Consider the following 323-residue polypeptide: o-succinylbenzoate synthase (323 aa).

Lys134 (proton donor) is an active-site residue. 3 residues coordinate Mg(2+): Asp162, Glu191, and Asp214. Catalysis depends on Lys236, which acts as the Proton acceptor.

Belongs to the mandelate racemase/muconate lactonizing enzyme family. MenC type 1 subfamily. A divalent metal cation serves as cofactor.

It catalyses the reaction (1R,6R)-6-hydroxy-2-succinyl-cyclohexa-2,4-diene-1-carboxylate = 2-succinylbenzoate + H2O. The protein operates within quinol/quinone metabolism; 1,4-dihydroxy-2-naphthoate biosynthesis; 1,4-dihydroxy-2-naphthoate from chorismate: step 4/7. Its pathway is quinol/quinone metabolism; menaquinone biosynthesis. In terms of biological role, converts 2-succinyl-6-hydroxy-2,4-cyclohexadiene-1-carboxylate (SHCHC) to 2-succinylbenzoate (OSB). The protein is o-succinylbenzoate synthase of Yersinia enterocolitica serotype O:8 / biotype 1B (strain NCTC 13174 / 8081).